The primary structure comprises 274 residues: Elongation factor Ts (274 aa).

Residues 76–79 (TDFV) are involved in Mg(2+) ion dislocation from EF-Tu.

The protein belongs to the EF-Ts family.

The protein resides in the cytoplasm. Its function is as follows. Associates with the EF-Tu.GDP complex and induces the exchange of GDP to GTP. It remains bound to the aminoacyl-tRNA.EF-Tu.GTP complex up to the GTP hydrolysis stage on the ribosome. In Mycobacterium sp. (strain JLS), this protein is Elongation factor Ts.